A 512-amino-acid chain; its full sequence is Ribonuclease Y (512 aa).

The helical transmembrane segment at 2–22 (VGMYIIIPIVTFIIGGLLAWL) threads the bilayer. In terms of domain architecture, KH spans 202–262 (SITVFHIESD…VRREIARLAL (61 aa)). The HD domain occupies 328 to 421 (LLQHARETAN…VQVCDAISGA (94 aa)).

This sequence belongs to the RNase Y family.

The protein resides in the cell membrane. Endoribonuclease that initiates mRNA decay. The sequence is that of Ribonuclease Y from Parabacteroides distasonis (strain ATCC 8503 / DSM 20701 / CIP 104284 / JCM 5825 / NCTC 11152).